Consider the following 162-residue polypeptide: Ribosome maturation factor RimP (162 aa).

Belongs to the RimP family.

It is found in the cytoplasm. Its function is as follows. Required for maturation of 30S ribosomal subunits. The polypeptide is Ribosome maturation factor RimP (Ralstonia pickettii (strain 12J)).